Here is a 265-residue protein sequence, read N- to C-terminus: Shikimate dehydrogenase (NADP(+)) (265 aa).

Shikimate contacts are provided by residues 15–17 (SLS) and Thr62. Lys66 serves as the catalytic Proton acceptor. Shikimate is bound by residues Asn87 and Asp102. Residues 125 to 129 (GAGGA), 149 to 154 (NRTLEK), and Leu209 contribute to the NADP(+) site. Tyr211 is a binding site for shikimate. NADP(+) is bound at residue Gly233.

It belongs to the shikimate dehydrogenase family. In terms of assembly, homodimer.

It carries out the reaction shikimate + NADP(+) = 3-dehydroshikimate + NADPH + H(+). Its pathway is metabolic intermediate biosynthesis; chorismate biosynthesis; chorismate from D-erythrose 4-phosphate and phosphoenolpyruvate: step 4/7. In terms of biological role, involved in the biosynthesis of the chorismate, which leads to the biosynthesis of aromatic amino acids. Catalyzes the reversible NADPH linked reduction of 3-dehydroshikimate (DHSA) to yield shikimate (SA). The chain is Shikimate dehydrogenase (NADP(+)) from Legionella pneumophila (strain Corby).